We begin with the raw amino-acid sequence, 141 residues long: Hemoglobin subunit alpha-D (141 aa).

In terms of domain architecture, Globin spans 1-141 (VLTAEDRRLL…VADVLSEKYR (141 aa)). Heme b contacts are provided by His57 and His87.

This sequence belongs to the globin family. The deoxy-Hb is a heterotetramer of two alpha and two beta chains, but oxygenation results in dissociation to dimers. Red blood cells.

Functionally, involved in oxygen transport from the lung to the various peripheral tissues. The protein is Hemoglobin subunit alpha-D (HBAD) of Erythrolamprus miliaris (South American water snake).